The primary structure comprises 286 residues: 2-hydroxy-6-oxo-6-phenylhexa-2,4-dienoate hydrolase (286 aa).

Residues 42–43 (GG), N51, N111, T180, and R190 each bind substrate. The Proton acceptor role is filled by H265. Residue W266 coordinates substrate.

Belongs to the AB hydrolase superfamily. BphD family. Homodimer.

The catalysed reaction is 2,6-dioxo-6-phenylhexa-3-enoate + H2O = 2-oxopent-4-enoate + benzoate + H(+). Its pathway is xenobiotic degradation; biphenyl degradation; 2-hydroxy-2,4-pentadienoate and benzoate from biphenyl: step 4/4. In terms of biological role, catalyzes an unusual C-C bond hydrolysis of 2-hydroxy-6-oxo-6-phenylhexa-2,4-dienoic acid (HOPDA) to produce benzoic acid and 2-hydroxy-2,4-pentadienoic acid (HPD). The sequence is that of 2-hydroxy-6-oxo-6-phenylhexa-2,4-dienoate hydrolase from Comamonas testosteroni (Pseudomonas testosteroni).